The sequence spans 226 residues: MKKAVILISGGLDSTTCLAVAKSKGFSCYALSFDYGQKHHSELVAAEKIAAHFNVVRHEVVTLSIGKLGGSALTDNSLDVPDYGGNESIPITYVPARNTIFLSIALGWAEILDAESILIGASAIDYSGYPDCRPEYIAAFQNLANLATKRGIEGHSIKIEAPLIHLSKAETIKLGYSLGVDYSMTVSCYRANEEGLACGYCDSCELRKKGFKEAEIKDPTQYITKV.

8–18 (ISGGLDSTTCL) provides a ligand contact to ATP. 4 residues coordinate Zn(2+): Cys188, Cys198, Cys201, and Cys204.

It belongs to the QueC family. Zn(2+) is required as a cofactor.

The enzyme catalyses 7-carboxy-7-deazaguanine + NH4(+) + ATP = 7-cyano-7-deazaguanine + ADP + phosphate + H2O + H(+). Its pathway is purine metabolism; 7-cyano-7-deazaguanine biosynthesis. Its function is as follows. Catalyzes the ATP-dependent conversion of 7-carboxy-7-deazaguanine (CDG) to 7-cyano-7-deazaguanine (preQ(0)). In Coxiella burnetii (strain RSA 331 / Henzerling II), this protein is 7-cyano-7-deazaguanine synthase.